The chain runs to 93 residues: Small ribosomal subunit protein uS15c (93 aa).

It belongs to the universal ribosomal protein uS15 family. In terms of assembly, part of the 30S ribosomal subunit.

The protein resides in the plastid. The protein localises to the chloroplast. The sequence is that of Small ribosomal subunit protein uS15c (rps15) from Jasminum nudiflorum (Winter jasmine).